The chain runs to 229 residues: Purine nucleoside phosphorylase BB_0467 (229 aa).

The Zn(2+) site is built by His-55, Cys-91, and His-108.

This sequence belongs to the purine nucleoside phosphorylase YfiH/LACC1 family. Homodimer. Requires Cu(2+) as cofactor. The cofactor is Zn(2+).

It catalyses the reaction adenosine + phosphate = alpha-D-ribose 1-phosphate + adenine. It carries out the reaction S-methyl-5'-thioadenosine + phosphate = 5-(methylsulfanyl)-alpha-D-ribose 1-phosphate + adenine. The catalysed reaction is inosine + phosphate = alpha-D-ribose 1-phosphate + hypoxanthine. The enzyme catalyses adenosine + H2O + H(+) = inosine + NH4(+). In terms of biological role, purine nucleoside enzyme that catalyzes the phosphorolysis of adenosine and inosine nucleosides, yielding D-ribose 1-phosphate and the respective free bases, adenine and hypoxanthine. Also catalyzes the phosphorolysis of S-methyl-5'-thioadenosine into adenine and S-methyl-5-thio-alpha-D-ribose 1-phosphate. Also has adenosine deaminase activity. The chain is Purine nucleoside phosphorylase BB_0467 from Borreliella burgdorferi (strain ATCC 35210 / DSM 4680 / CIP 102532 / B31) (Borrelia burgdorferi).